The primary structure comprises 526 residues: Peptide chain release factor 3 (526 aa).

The tr-type G domain maps to 9–277 (DKRRTFAIIS…GIVEWAPKPL (269 aa)). GTP is bound by residues 18–25 (SHPDAGKT), 86–90 (DTPGH), and 140–143 (NKLD).

This sequence belongs to the TRAFAC class translation factor GTPase superfamily. Classic translation factor GTPase family. PrfC subfamily.

Its subcellular location is the cytoplasm. In terms of biological role, increases the formation of ribosomal termination complexes and stimulates activities of RF-1 and RF-2. It binds guanine nucleotides and has strong preference for UGA stop codons. It may interact directly with the ribosome. The stimulation of RF-1 and RF-2 is significantly reduced by GTP and GDP, but not by GMP. In Shewanella sp. (strain MR-4), this protein is Peptide chain release factor 3.